The chain runs to 1269 residues: Multifunctional 2-oxoglutarate metabolism enzyme (1269 aa).

The tract at residues 1 to 41 is 2-oxoglutarate dehydrogenase E1, N-terminal part; the sequence is MSSSPSPFGQNEWLVEEMYRKFREDPSSVDPSWHEFLVDYN. Over residues 23–37 the composition is skewed to basic and acidic residues; it reads REDPSSVDPSWHEFL. The segment at 23–145 is disordered; sequence REDPSSVDPS…AQPADDSDQN (123 aa). Positions 42–107 are linker; the sequence is PEPTTDSSAS…SKPQAKAKPA (66 aa). Over residues 43-58 the composition is skewed to polar residues; it reads EPTTDSSASENGQQTR. Positions 63–75 are enriched in pro residues; the sequence is KAPPEPAPAPAPK. The segment at 108–378 is succinyltransferase E2; sequence ESKSSTKPAD…LRTVHQLLLS (271 aa). Residue His357 is the Proton acceptor; for succinyltransferase activity of the active site. The interval 379–1269 is 2-oxoglutarate dehydrogenase E1, C-terminal part; that stretch reads DDFFDEIFRE…QEILDEAFAP (891 aa). Arg583 is a binding site for thiamine diphosphate. The 2-oxoglutarate site is built by His622 and Ser647. Thiamine diphosphate contacts are provided by Ser647, Leu649, Asp686, Ala687, Ala688, and Asn719. Asp686 serves as a coordination point for Mg(2+). Mg(2+) is bound by residues Asn719 and Ile721. The stretch at 824–855 forms a coiled coil; the sequence is DISMKEAEDALRDYQGQLEQVFNEVRELEKHE. His1061 is a 2-oxoglutarate binding site. 7 residues coordinate acetyl-CoA: Thr1079, Arg1095, Lys1130, Ser1133, Gln1183, Arg1190, and Arg1191.

The protein belongs to the 2-oxoacid dehydrogenase family. Kgd subfamily. As to quaternary structure, homodimer. The 2-oxoglutarate dehydrogenase (ODH) complex contains multiple copies of three enzymatic components: 2-oxoglutarate dehydrogenase (E1), dihydrolipoamide succinyltransferase (E2) and lipoamide dehydrogenase (E3). It depends on Mg(2+) as a cofactor. Requires thiamine diphosphate as cofactor.

The enzyme catalyses glyoxylate + 2-oxoglutarate + H(+) = 2-hydroxy-3-oxoadipate + CO2. It carries out the reaction 2-oxoglutarate + H(+) = succinate semialdehyde + CO2. The catalysed reaction is N(6)-[(R)-lipoyl]-L-lysyl-[protein] + 2-oxoglutarate + H(+) = N(6)-[(R)-S(8)-succinyldihydrolipoyl]-L-lysyl-[protein] + CO2. It catalyses the reaction N(6)-[(R)-dihydrolipoyl]-L-lysyl-[protein] + succinyl-CoA = N(6)-[(R)-S(8)-succinyldihydrolipoyl]-L-lysyl-[protein] + CoA. The protein operates within carbohydrate metabolism; tricarboxylic acid cycle; succinate from 2-oxoglutarate (transferase route): step 1/2. It functions in the pathway carbohydrate metabolism; tricarboxylic acid cycle; succinyl-CoA from 2-oxoglutarate (dehydrogenase route): step 1/1. Alpha-ketoglutarate dehydrogenase and decarboxylase activities are inhibited by unphosphorylated GarA, and allosterically activated by acetyl-CoA, the main substrate of the TCA cycle. Functionally, shows three enzymatic activities that share a first common step, the attack of thiamine-PP on 2-oxoglutarate (alpha-ketoglutarate, KG), leading to the formation of an enamine-thiamine-PP intermediate upon decarboxylation. Thus, displays KGD activity, catalyzing the decarboxylation from five-carbon 2-oxoglutarate to four-carbon succinate semialdehyde (SSA). Also catalyzes C-C bond formation between the activated aldehyde formed after decarboxylation of alpha-ketoglutarate and the carbonyl of glyoxylate (GLX), to yield 2-hydroxy-3-oxoadipate (HOA), which spontaneously decarboxylates to form 5-hydroxylevulinate (HLA). And is also a component of the 2-oxoglutarate dehydrogenase (ODH) complex, that catalyzes the overall conversion of 2-oxoglutarate to succinyl-CoA and CO(2). The KG decarboxylase and KG dehydrogenase reactions provide two alternative, tightly regulated, pathways connecting the oxidative and reductive branches of the TCA cycle. This Mycobacterium sp. (strain KMS) protein is Multifunctional 2-oxoglutarate metabolism enzyme (kgd).